A 297-amino-acid polypeptide reads, in one-letter code: Phosphatidylglycerol--prolipoprotein diacylglyceryl transferase (297 aa).

Helical transmembrane passes span 20–40 (FITI…GLFV), 57–77 (EILP…YVIF), 105–125 (AVWE…ISII), and 133–153 (INLK…QSIG). Arg154 is a binding site for a 1,2-diacyl-sn-glycero-3-phospho-(1'-sn-glycerol). A run of 3 helical transmembrane segments spans residues 193 to 213 (PTFL…IIIF), 225 to 245 (GFIS…IEGL), and 266 to 286 (AQFI…FLRL).

It belongs to the Lgt family.

It is found in the cell inner membrane. The enzyme catalyses L-cysteinyl-[prolipoprotein] + a 1,2-diacyl-sn-glycero-3-phospho-(1'-sn-glycerol) = an S-1,2-diacyl-sn-glyceryl-L-cysteinyl-[prolipoprotein] + sn-glycerol 1-phosphate + H(+). It functions in the pathway protein modification; lipoprotein biosynthesis (diacylglyceryl transfer). Its function is as follows. Catalyzes the transfer of the diacylglyceryl group from phosphatidylglycerol to the sulfhydryl group of the N-terminal cysteine of a prolipoprotein, the first step in the formation of mature lipoproteins. This chain is Phosphatidylglycerol--prolipoprotein diacylglyceryl transferase, found in Prochlorococcus marinus (strain MIT 9215).